Here is an 833-residue protein sequence, read N- to C-terminus: F1 capsule-anchoring protein (833 aa).

The N-terminal stretch at 1–25 (MRYSKLFLCAGLTLATLPCWGRAYT) is a signal peptide. Cysteine 807 and cysteine 829 form a disulfide bridge.

Belongs to the fimbrial export usher family.

The protein localises to the cell outer membrane. Functionally, a probable role in capsular biogenesis. It is likely that the caf1A molecule binds F1 antigen subunits during the extracellular secretion process. This chain is F1 capsule-anchoring protein (caf1A), found in Yersinia pestis.